A 110-amino-acid polypeptide reads, in one-letter code: UPF0060 membrane protein MMAR_2961 (110 aa).

Helical transmembrane passes span 6-26 (ILLFIVAAVAEIGGAWLVWQG), 32-52 (GLAWIGAGVIALGLYGFVATL), 61-81 (ILAAYGGIFVAGSLLWGMAFD), and 90-110 (IVGALVCLAGVGVIMYAPRAH).

Belongs to the UPF0060 family.

It is found in the cell membrane. In Mycobacterium marinum (strain ATCC BAA-535 / M), this protein is UPF0060 membrane protein MMAR_2961.